The sequence spans 224 residues: RNA-free ribonuclease P (224 aa).

It belongs to the HARP family.

It catalyses the reaction Endonucleolytic cleavage of RNA, removing 5'-extranucleotides from tRNA precursor.. Functionally, RNA-free RNase P that catalyzes the removal of the 5'-leader sequence from pre-tRNA to produce the mature 5'-terminus. This chain is RNA-free ribonuclease P, found in Haloarcula marismortui (strain ATCC 43049 / DSM 3752 / JCM 8966 / VKM B-1809) (Halobacterium marismortui).